The following is a 74-amino-acid chain: Small ribosomal subunit protein bS18 (74 aa).

Belongs to the bacterial ribosomal protein bS18 family. Part of the 30S ribosomal subunit. Forms a tight heterodimer with protein bS6.

Binds as a heterodimer with protein bS6 to the central domain of the 16S rRNA, where it helps stabilize the platform of the 30S subunit. The polypeptide is Small ribosomal subunit protein bS18 (Thioalkalivibrio sulfidiphilus (strain HL-EbGR7)).